A 347-amino-acid polypeptide reads, in one-letter code: uncharacterized protein (347 aa).

Residues 5-44 (CTICHNTPNRPVRLDCNHEFCYICIKGSIQNDMLNCAVCR) form an RING-type zinc finger. Residues 244 to 321 (NVQANFNVAR…NLDAWRQIKR (78 aa)) form the WWE domain.

This is an uncharacterized protein from Caenorhabditis elegans.